The following is a 482-amino-acid chain: UDP-glycosyltransferase 86A2 (482 aa).

UDP-alpha-D-glucose-binding positions include S297, 355-357 (CCQ), 372-380 (HCGWNSILE), and 394-397 (LTDQ).

Belongs to the UDP-glycosyltransferase family.

The protein is UDP-glycosyltransferase 86A2 (UGT86A2) of Arabidopsis thaliana (Mouse-ear cress).